A 220-amino-acid polypeptide reads, in one-letter code: Deep-sea actinoporin Cjtox I (220 aa).

Positions 1-19 (MNRLIILCLVAATIYSTIA) are cleaved as a signal peptide. Residues 20-42 (LPMKEDISNEERPTSVNEKPVKK) constitute a propeptide that is removed on maturation. Residues Ser-96, Val-128, Ser-146, Pro-148, Tyr-174, Tyr-178, and Tyr-179 each coordinate phosphocholine. The segment at 146–161 (SVPYDYNWYSNWWNIK) is trp-rich region, which is important for the binding to lipid membrane. A Cell attachment site, crucial for protein stability motif is present at residues 185–187 (KGN).

The protein belongs to the actinoporin family. Sea anemone subfamily. Octamer or nonamer in membranes. Monomer in the soluble state. As to expression, expressed in tentacles.

It localises to the secreted. The protein localises to the nematocyst. Its subcellular location is the target cell membrane. In terms of biological role, probably acts in predation. Pore-forming protein that forms cations-selective hydrophilic pores of around 1 nm and causes cytolysis. Pore formation is a multi-step process that involves specific recognition of membrane sphingomyelin (but neither cholesterol nor phosphatidylcholine) using aromatic rich region and adjacent phosphocholine (POC) binding site, firm binding to the membrane (mainly driven by hydrophobic interactions) accompanied by the transfer of the N-terminal region to the lipid-water interface and finally pore formation after oligomerization of monomers. Shows hemolytic activity on equine erythrocytes. Hemolysis is moderately inhibited in presence of sphingomyelin, suggesting that this protein targets sphingomyelin. This is Deep-sea actinoporin Cjtox I from Cribrinopsis japonica (Deep-sea anemone).